A 398-amino-acid polypeptide reads, in one-letter code: Succinate--CoA ligase [ADP-forming] subunit beta (398 aa).

The 245-residue stretch at 9 to 253 (KEILASYGVR…IREENPIEVE (245 aa)) folds into the ATP-grasp domain. Residues Lys-50, 57–59 (GRG), Val-106, and Glu-116 each bind ATP. Positions 208 and 222 each coordinate Mg(2+). Substrate-binding positions include Asn-273 and 330 to 332 (GIV).

The protein belongs to the succinate/malate CoA ligase beta subunit family. In terms of assembly, heterotetramer of two alpha and two beta subunits. Requires Mg(2+) as cofactor.

It carries out the reaction succinate + ATP + CoA = succinyl-CoA + ADP + phosphate. It catalyses the reaction GTP + succinate + CoA = succinyl-CoA + GDP + phosphate. The protein operates within carbohydrate metabolism; tricarboxylic acid cycle; succinate from succinyl-CoA (ligase route): step 1/1. Functionally, succinyl-CoA synthetase functions in the citric acid cycle (TCA), coupling the hydrolysis of succinyl-CoA to the synthesis of either ATP or GTP and thus represents the only step of substrate-level phosphorylation in the TCA. The beta subunit provides nucleotide specificity of the enzyme and binds the substrate succinate, while the binding sites for coenzyme A and phosphate are found in the alpha subunit. This is Succinate--CoA ligase [ADP-forming] subunit beta from Flavobacterium psychrophilum (strain ATCC 49511 / DSM 21280 / CIP 103535 / JIP02/86).